The following is a 729-amino-acid chain: Transient receptor potential cation channel subfamily V member 5 (729 aa).

Residues methionine 1–proline 327 lie on the Cytoplasmic side of the membrane. 6 ANK repeats span residues isoleucine 44 to glutamine 74, leucine 78 to phenylalanine 107, alanine 116 to alanine 145, phenylalanine 162 to alanine 191, leucine 195 to histidine 228, and glutamine 239 to tryptophan 268. A helical transmembrane segment spans residues tyrosine 328–valine 348. The Extracellular portion of the chain corresponds to tyrosine 349 to arginine 385. Residue asparagine 358 is glycosylated (N-linked (GlcNAc...) asparagine). Residues leucine 386–phenylalanine 408 form a helical membrane-spanning segment. Topologically, residues arginine 409 to threonine 419 are cytoplasmic. A helical transmembrane segment spans residues isoleucine 420–methionine 442. Over arginine 443–asparagine 448 the chain is Extracellular. The helical transmembrane segment at glycine 449–threonine 469 threads the bilayer. At arginine 470–arginine 492 the chain is on the cytoplasmic side. Residues phenylalanine 493 to glutamine 513 traverse the membrane as a helical segment. An intramembrane region (pore-forming) is located at residues tyrosine 524–proline 544. Aspartate 542 contacts Ca(2+). The helical transmembrane segment at isoleucine 557–methionine 577 threads the bilayer. At methionine 578–phenylalanine 729 the chain is on the cytoplasmic side. The tract at residues valine 598 to valine 602 is interaction with S100A10. Residues valine 650–asparagine 653 are involved in Ca(2+)-dependent inactivation. Residues serine 654 to glutamate 665 show a composition bias toward basic and acidic residues. The tract at residues serine 654–threonine 675 is disordered. The residue at position 685 (threonine 685) is a Phosphothreonine. Residue serine 689 is modified to Phosphoserine. Residues glycine 700–phenylalanine 729 form an involved in Ca(2+)-dependent inactivation region.

The protein belongs to the transient receptor (TC 1.A.4) family. TrpV subfamily. TRPV5 sub-subfamily. Homotetramer and probably heterotetramer with TRPV6. Interacts with TRPV6. Interacts with S100A10 and probably with the ANAX2-S100A10 heterotetramer. The interaction with S100A10 is required for the trafficking to the plasma membrane. Interacts with calmodulin. Interacts with BSPRY, which results in its inactivation. Glycosylated. As to expression, expressed at high levels in kidney, small intestine and pancreas, and at lower levels in testis, prostate, placenta, brain, colon and rectum.

It localises to the apical cell membrane. The catalysed reaction is Ca(2+)(in) = Ca(2+)(out). Its activity is regulated as follows. Activated by WNK3. Constitutively active calcium selective cation channel thought to be involved in Ca(2+) reabsorption in kidney and intestine. Required for normal Ca(2+) reabsorption in the kidney distal convoluted tubules. The channel is activated by low internal calcium level and the current exhibits an inward rectification. A Ca(2+)-dependent feedback regulation includes fast channel inactivation and slow current decay. Heteromeric assembly with TRPV6 seems to modify channel properties. TRPV5-TRPV6 heteromultimeric concatemers exhibit voltage-dependent gating. The protein is Transient receptor potential cation channel subfamily V member 5 (TRPV5) of Homo sapiens (Human).